Reading from the N-terminus, the 821-residue chain is Lysosomal beta glucosidase (821 aa).

Residues 1-24 (MKTIKSLFLLSLLIVNLLISSTYG) form the signal peptide. The propeptide occupies 25 to 69 (SSIRVSIVGGEEAEVIEKPRTFGNKRELKLEYSQIYPKKQLNQEN). Residues Asn-113, Asn-146, and Asn-266 are each glycosylated (N-linked (GlcNAc...) asparagine). Asp-363 is an active-site residue. N-linked (GlcNAc...) asparagine glycans are attached at residues Asn-535, Asn-555, Asn-703, and Asn-721.

Belongs to the glycosyl hydrolase 3 family. Post-translationally, glycosylated. The polyoligosaccharides are of the high-mannose type and are highly substituted with both phosphate and sulfate moieties.

It is found in the lysosome. It catalyses the reaction Hydrolysis of terminal, non-reducing beta-D-glucosyl residues with release of beta-D-glucose.. This is Lysosomal beta glucosidase (gluA) from Dictyostelium discoideum (Social amoeba).